Here is a 406-residue protein sequence, read N- to C-terminus: Tryptophan 2,3-dioxygenase (406 aa).

Residue S19 is modified to Phosphoserine. Residues 72–76 (FIITH) and R144 each bind substrate. H328 is a heme binding site. T342 serves as a coordination point for substrate.

It belongs to the tryptophan 2,3-dioxygenase family. As to quaternary structure, homotetramer. Dimer of dimers. It depends on heme as a cofactor.

It catalyses the reaction L-tryptophan + O2 = N-formyl-L-kynurenine. It functions in the pathway amino-acid degradation; L-tryptophan degradation via kynurenine pathway; L-kynurenine from L-tryptophan: step 1/2. Its function is as follows. Heme-dependent dioxygenase that catalyzes the oxidative cleavage of the L-tryptophan (L-Trp) pyrrole ring and converts L-tryptophan to N-formyl-L-kynurenine. Catalyzes the oxidative cleavage of the indole moiety. The protein is Tryptophan 2,3-dioxygenase of Mus musculus (Mouse).